The following is a 406-amino-acid chain: Collagen and calcium-binding EGF domain-containing protein 1 (406 aa).

The first 34 residues, 1–34 (MVPPPPSRGGAARGQLGRSLGPLLLLLALGHTWT), serve as a signal peptide directing secretion. Positions 134–175 (DIDECASSNGTLCAHICINTLGSYRCECREGYIREDDGKTCT) constitute an EGF-like; calcium-binding domain. 3 cysteine pairs are disulfide-bonded: cysteine 138–cysteine 150, cysteine 146–cysteine 159, and cysteine 161–cysteine 174. Residue asparagine 142 is glycosylated (N-linked (GlcNAc...) asparagine). Residue asparagine 182 is glycosylated (N-linked (GlcNAc...) asparagine). 2 disordered regions span residues 244–335 (YLPG…PGSF) and 360–406 (RTHS…DFYP). Collagen-like domains are found at residues 245–290 (LPGP…PMGP) and 300–333 (GRRG…GPPG). Over residues 270 to 279 (PGMPGPPGQP) the composition is skewed to pro residues. Residues 281-292 (PRGSMGPMGPSP) show a composition bias toward low complexity. Serine 385 is a glycosylation site (O-linked (Xyl...) (chondroitin sulfate) serine). The segment covering 386–406 (GDDHPRRTETRDLRAPRDFYP) has biased composition (basic and acidic residues).

Belongs to the CCBE1 family. As to expression, detected in fibroblasts and urine (at protein level). Not expressed in blood or lymphatic endothelial cells.

The protein localises to the secreted. Functionally, required for lymphangioblast budding and angiogenic sprouting from venous endothelium during embryogenesis. In Homo sapiens (Human), this protein is Collagen and calcium-binding EGF domain-containing protein 1 (CCBE1).